The following is a 207-amino-acid chain: Small ribosomal subunit protein uS4 (207 aa).

The segment at 31–55 (KCKLDSKPGQHGRTSGARTSDYGTQ) is disordered. Residues 42–53 (GRTSGARTSDYG) are compositionally biased toward polar residues. The 64-residue stretch at 97-160 (SRLDNVVYRM…KKQARIVEAL (64 aa)) folds into the S4 RNA-binding domain.

It belongs to the universal ribosomal protein uS4 family. As to quaternary structure, part of the 30S ribosomal subunit. Contacts protein S5. The interaction surface between S4 and S5 is involved in control of translational fidelity.

In terms of biological role, one of the primary rRNA binding proteins, it binds directly to 16S rRNA where it nucleates assembly of the body of the 30S subunit. With S5 and S12 plays an important role in translational accuracy. The sequence is that of Small ribosomal subunit protein uS4 from Burkholderia lata (strain ATCC 17760 / DSM 23089 / LMG 22485 / NCIMB 9086 / R18194 / 383).